Consider the following 134-residue polypeptide: DNA-binding protein H-NS, plasmid (134 aa).

Positions 23–67 (LEILEELLEKLSVVVEERRQEESSKEAELKARLEKIESLRQLMLE) form a coiled coil. A disordered region spans residues 77–96 (SSFSAKSGAPKKVREPRPAK). The DNA-binding element occupies 112-117 (QGRTPK).

Belongs to the histone-like protein H-NS family. As to quaternary structure, homodimer that oligomerizes on DNA into higher-order complexes that form bridges between disparate regions of DNA compacting it. Interacts with Hha, YdgT and StpA.

The protein resides in the cytoplasm. The protein localises to the nucleoid. In terms of biological role, a DNA-binding protein implicated in transcriptional repression and chromosome organization and compaction. Binds DNA, modifying gene expression, especially non-core genes. Does not regulate the same set of genes as its chromosomal counterpart (tested in S.typhimurium strain SL1344 / SV5015, chromosomal H-NS protein is AC A0A0H3NBY9). Thus it has a not-completely overlapping set of gene targets compared to its chromosomal homolog; many of these target genes are either plasmid-encoded or acquired by horizontally transferred genes (HTG). This protein can function in the absence of H-NS-modulating protein Hha (either chromosomal or plasmid-encoded), although many HTG genes are regulated by an H-NS/Hha complex. Binds nucleation sites in AT-rich DNA and bridges them, forming higher-order nucleoprotein complexes and condensing the chromosome. A subset of genes are repressed by H-NS in association with Hha and/or Cnu (ydgT). The polypeptide is DNA-binding protein H-NS, plasmid (hns) (Salmonella typhi).